A 475-amino-acid chain; its full sequence is Tetratricopeptide repeat protein 29 (475 aa).

TPR repeat units lie at residues 92 to 131 (DALR…EDAE), 136 to 173 (FEDV…AQLI), 182 to 215 (AEAH…TQGR), 234 to 267 (LRTY…AKEG), 274 to 307 (GEAS…STEL), 314 to 347 (GRAY…ARNN), and 354 to 387 (VRAS…TVEL). The interval 436–475 (DIEPDPVTEEFRGSTVETVSQNSEHLEELSRFPGDQKNET) is disordered. The span at 459–475 (EHLEELSRFPGDQKNET) shows a compositional bias: basic and acidic residues.

The protein localises to the cytoplasm. It is found in the cytoskeleton. The protein resides in the flagellum axoneme. Functionally, axonemal protein which is implicated in axonemal and/or peri-axonemal structure assembly and regulates flagellum assembly and beating and therefore sperm motility. The chain is Tetratricopeptide repeat protein 29 (TTC29) from Macaca fascicularis (Crab-eating macaque).